Here is a 208-residue protein sequence, read N- to C-terminus: Glutathione S-transferase (208 aa).

The region spanning 1–78 (MSYKLTYFPI…HLARKFNLNG (78 aa)) is the GST N-terminal domain. Glutathione-binding positions include Tyr-7, Lys-42, 49–50 (QL), and 62–63 (QS). The GST C-terminal domain maps to 80–200 (NNAETSYVDM…YCAKRNASKM (121 aa)).

This sequence belongs to the GST superfamily. Pi family. Homodimer.

The enzyme catalyses RX + glutathione = an S-substituted glutathione + a halide anion + H(+). Conjugation of reduced glutathione to a wide number of exogenous and endogenous hydrophobic electrophiles. The polypeptide is Glutathione S-transferase (Dirofilaria immitis (Canine heartworm)).